A 244-amino-acid polypeptide reads, in one-letter code: WUSCHEL-related homeobox 3 (244 aa).

Residues 4–68 (VASTRWCPTP…NHKARDRQKL (65 aa)) constitute a DNA-binding region (homeobox; WUS-type).

The protein belongs to the WUS homeobox family. Expressed in aerial parts of seedlings, inflorescences and flowers at low level. Expressed in a restricted number of L1 cells at the lateral regions of flower primordia.

The protein resides in the nucleus. In terms of biological role, probable transcription factor required to initiate organ founder cells in a lateral domain of shoot meristems. Involved in the lateral sepal axis-dependent development of flowers, probably by regulating the proliferation of L1 cells at the lateral region of flower primordia. Required for the formation of the margin cells of the first and second whorl organs. This Arabidopsis thaliana (Mouse-ear cress) protein is WUSCHEL-related homeobox 3 (WOX3).